We begin with the raw amino-acid sequence, 380 residues long: Erythronate-4-phosphate dehydrogenase (380 aa).

Substrate-binding residues include S45 and T66. Residues D146, T174, 205–207 (ASR), and D231 contribute to the NAD(+) site. R207 is an active-site residue. E236 is an active-site residue. H253 acts as the Proton donor in catalysis. G256 provides a ligand contact to NAD(+). Substrate is bound at residue Y257.

This sequence belongs to the D-isomer specific 2-hydroxyacid dehydrogenase family. PdxB subfamily. In terms of assembly, homodimer.

The protein resides in the cytoplasm. The enzyme catalyses 4-phospho-D-erythronate + NAD(+) = (R)-3-hydroxy-2-oxo-4-phosphooxybutanoate + NADH + H(+). It functions in the pathway cofactor biosynthesis; pyridoxine 5'-phosphate biosynthesis; pyridoxine 5'-phosphate from D-erythrose 4-phosphate: step 2/5. Functionally, catalyzes the oxidation of erythronate-4-phosphate to 3-hydroxy-2-oxo-4-phosphonooxybutanoate. This chain is Erythronate-4-phosphate dehydrogenase, found in Pseudomonas putida (strain ATCC 700007 / DSM 6899 / JCM 31910 / BCRC 17059 / LMG 24140 / F1).